The following is a 402-amino-acid chain: Glutamyl-tRNA reductase (402 aa).

Substrate-binding positions include 48-51, Ser-91, 96-98, and Gln-102; these read TCNR and EDQ. Cys-49 acts as the Nucleophile in catalysis. 171 to 176 is an NADP(+) binding site; it reads GAGKMG.

It belongs to the glutamyl-tRNA reductase family. As to quaternary structure, homodimer.

The enzyme catalyses (S)-4-amino-5-oxopentanoate + tRNA(Glu) + NADP(+) = L-glutamyl-tRNA(Glu) + NADPH + H(+). It participates in porphyrin-containing compound metabolism; protoporphyrin-IX biosynthesis; 5-aminolevulinate from L-glutamyl-tRNA(Glu): step 1/2. In terms of biological role, catalyzes the NADPH-dependent reduction of glutamyl-tRNA(Glu) to glutamate 1-semialdehyde (GSA). The protein is Glutamyl-tRNA reductase of Methanothermobacter thermautotrophicus (strain ATCC 29096 / DSM 1053 / JCM 10044 / NBRC 100330 / Delta H) (Methanobacterium thermoautotrophicum).